The following is a 164-amino-acid chain: ATP synthase subunit b 1 (164 aa).

A helical membrane pass occupies residues 4–24 (MELAELWVAVAFFVFVGILLY).

Belongs to the ATPase B chain family. F-type ATPases have 2 components, F(1) - the catalytic core - and F(0) - the membrane proton channel. F(1) has five subunits: alpha(3), beta(3), gamma(1), delta(1), epsilon(1). F(0) has three main subunits: a(1), b(2) and c(10-14). The alpha and beta chains form an alternating ring which encloses part of the gamma chain. F(1) is attached to F(0) by a central stalk formed by the gamma and epsilon chains, while a peripheral stalk is formed by the delta and b chains.

The protein localises to the cell inner membrane. In terms of biological role, f(1)F(0) ATP synthase produces ATP from ADP in the presence of a proton or sodium gradient. F-type ATPases consist of two structural domains, F(1) containing the extramembraneous catalytic core and F(0) containing the membrane proton channel, linked together by a central stalk and a peripheral stalk. During catalysis, ATP synthesis in the catalytic domain of F(1) is coupled via a rotary mechanism of the central stalk subunits to proton translocation. Component of the F(0) channel, it forms part of the peripheral stalk, linking F(1) to F(0). The chain is ATP synthase subunit b 1 from Azorhizobium caulinodans (strain ATCC 43989 / DSM 5975 / JCM 20966 / LMG 6465 / NBRC 14845 / NCIMB 13405 / ORS 571).